A 215-amino-acid chain; its full sequence is Cytochrome b6 (215 aa).

Residues 32–52 traverse the membrane as a helical segment; the sequence is IFYCLGGITFTSFVIQVASGF. Cys35 contributes to the heme c binding site. Residues His86 and His100 each coordinate heme b. Transmembrane regions (helical) follow at residues 90 to 110, 116 to 136, and 186 to 206; these read ASMM…TGGF, LTWV…VTGY, and LHTF…FLMI. His187 and His202 together coordinate heme b.

This sequence belongs to the cytochrome b family. PetB subfamily. The 4 large subunits of the cytochrome b6-f complex are cytochrome b6, subunit IV (17 kDa polypeptide, PetD), cytochrome f and the Rieske protein, while the 4 small subunits are PetG, PetL, PetM and PetN. The complex functions as a dimer. Requires heme b as cofactor. Heme c is required as a cofactor.

It is found in the plastid. The protein resides in the chloroplast thylakoid membrane. Functionally, component of the cytochrome b6-f complex, which mediates electron transfer between photosystem II (PSII) and photosystem I (PSI), cyclic electron flow around PSI, and state transitions. The chain is Cytochrome b6 from Chaetosphaeridium globosum (Charophycean green alga).